Consider the following 101-residue polypeptide: Osteocalcin (101 aa).

An N-terminal signal peptide occupies residues Met1 to Gly18. A propeptide spanning residues Gly19 to Arg52 is cleaved from the precursor. The Gla domain maps to Ser53–Gly99. The Ca(2+) site is built by Glu69, Glu73, Glu76, and Asp82. 4-carboxyglutamate occurs at positions 69, 73, and 76. The cysteines at positions 75 and 81 are disulfide-linked.

The protein belongs to the osteocalcin/matrix Gla protein family. Post-translationally, gamma-carboxyglutamate residues are formed by vitamin K dependent carboxylation by GGCX. These residues are essential for the binding of calcium.

The protein resides in the secreted. In terms of biological role, the carboxylated form is one of the main organic components of the bone matrix, which constitutes 1-2% of the total bone protein. The carboxylated form binds strongly to apatite and calcium. This is Osteocalcin (bglap) from Xenopus tropicalis (Western clawed frog).